A 111-amino-acid chain; its full sequence is uncharacterized protein (111 aa).

A helical transmembrane segment spans residues Pro20–Tyr39.

Its subcellular location is the membrane. This is an uncharacterized protein from Saccharomyces cerevisiae (strain ATCC 204508 / S288c) (Baker's yeast).